The chain runs to 333 residues: MKKYLLYASLLTSVLLFSCSKNNPSEPVEDRSIEISIRVDDFTKTGETVRYERNQGSAAERLITNLYLLLFDQSGANPAKYYIAGNTFSGGIWLPDDMKVKLDMTQSEAGERKVYVVANVDNAVKTALDAVANESDLQTVKRTTAMPWSTDIASPFLMSGNKTHDFLANRLLDNVPLVRAIAKVELNISLSEKFQIVPIIVNGSLSEFKFRYVNFDKETYVVKPTTKPDNLISSANGVWPQITDWTVWGASLNTSPAPDAGTGYTLDANGKVTALRIVTYLNERDSKGATVEVALPRVDDGTLPPPEFGPELYRLPLPDKILRNHWYKYEVEI.

A signal peptide spans 1 to 18 (MKKYLLYASLLTSVLLFS). C19 is lipidated: N-palmitoyl cysteine. C19 carries the S-diacylglycerol cysteine lipid modification. The propeptide occupies 19 to 53 (CSKNNPSEPVEDRSIEISIRVDDFTKTGETVRYER).

It belongs to the bacteroidetes fimbrillin superfamily. FimA/Mfa1 family. Component of the fimbrium tip. Minor fimbriae are composed of a structural subunit, most often Mfa1, and the accessory subunits Mfa3, Mfa4 and Mfa5. Mfa4 is required for Mfa3 and Mfa5 insertion into the fimbrium. Fimbrium assembly occurs by linear, head-to-tail oligomerization of fimbrial subunits. This is mediated via insertion of a C-terminal beta-strand from one subunit into a groove in the N-terminal domain of the following subunit.

The protein localises to the fimbrium. It localises to the cell outer membrane. In terms of biological role, tip subunit of the minor fimbriae. These filamentous pili are attached to the cell surface; they mediate biofilm formation, adhesion onto host cells and onto other bacteria that are part of the oral microbiome. They play an important role in invasion of periodontal tissues and are recognized as major virulence factors. This is Minor fimbrium tip subunit MfA4 from Porphyromonas gingivalis (strain ATCC 33277 / DSM 20709 / CIP 103683 / JCM 12257 / NCTC 11834 / 2561).